The sequence spans 411 residues: Citrate synthase (411 aa).

Catalysis depends on residues His-304 and Asp-363.

This sequence belongs to the citrate synthase family.

It carries out the reaction oxaloacetate + acetyl-CoA + H2O = citrate + CoA + H(+). It participates in carbohydrate metabolism; tricarboxylic acid cycle; isocitrate from oxaloacetate: step 1/2. The sequence is that of Citrate synthase (gltA) from Rickettsia akari.